An 859-amino-acid chain; its full sequence is Photoactivated adenylate cyclase subunit beta-like protein ST- (859 aa).

One can recognise a BLUF 1 domain in the interval L56 to K149. The tract at residues R420–R444 is disordered. Residues L471–T563 form the BLUF 2 domain. The tract at residues A814–G859 is disordered. A compositionally biased stretch (basic and acidic residues) spans E825–G841. Positions R845 to G859 are enriched in polar residues.

In terms of assembly, heterotetramer of two alpha and two beta subunits.

Its subcellular location is the cell projection. The protein localises to the cilium. It localises to the flagellum. This is Photoactivated adenylate cyclase subunit beta-like protein ST- from Euglena gracilis.